The sequence spans 318 residues: Acetyl-coenzyme A carboxylase carboxyl transferase subunit alpha (318 aa).

The CoA carboxyltransferase C-terminal domain maps to 39-292 (LSDKAERQLR…GAAIAETLPG (254 aa)).

This sequence belongs to the AccA family. As to quaternary structure, acetyl-CoA carboxylase is a heterohexamer composed of biotin carboxyl carrier protein (AccB), biotin carboxylase (AccC) and two subunits each of ACCase subunit alpha (AccA) and ACCase subunit beta (AccD).

Its subcellular location is the cytoplasm. The enzyme catalyses N(6)-carboxybiotinyl-L-lysyl-[protein] + acetyl-CoA = N(6)-biotinyl-L-lysyl-[protein] + malonyl-CoA. The protein operates within lipid metabolism; malonyl-CoA biosynthesis; malonyl-CoA from acetyl-CoA: step 1/1. Component of the acetyl coenzyme A carboxylase (ACC) complex. First, biotin carboxylase catalyzes the carboxylation of biotin on its carrier protein (BCCP) and then the CO(2) group is transferred by the carboxyltransferase to acetyl-CoA to form malonyl-CoA. In Acidiphilium cryptum (strain JF-5), this protein is Acetyl-coenzyme A carboxylase carboxyl transferase subunit alpha.